Reading from the N-terminus, the 487-residue chain is GTPase Der (487 aa).

2 consecutive EngA-type G domains span residues 5 to 169 (PKLA…SREI) and 178 to 351 (IKVA…ANSQ). GTP-binding positions include 11–18 (GRPNVGKS), 58–62 (DTGGI), 121–124 (NKID), 184–191 (GRANVGKS), 231–235 (DTAGI), and 296–299 (NKWD). One can recognise a KH-like domain in the interval 352 to 439 (KRITTHQLNK…IHLKGKTKKD (88 aa)). Positions 441 to 466 (PVSSLSLTRKQTKSTDQENNEYDELY) are disordered.

Belongs to the TRAFAC class TrmE-Era-EngA-EngB-Septin-like GTPase superfamily. EngA (Der) GTPase family. Associates with the 50S ribosomal subunit.

Functionally, GTPase that plays an essential role in the late steps of ribosome biogenesis. The polypeptide is GTPase Der (Protochlamydia amoebophila (strain UWE25)).